The primary structure comprises 229 residues: Large ribosomal subunit protein uL1 (229 aa).

This sequence belongs to the universal ribosomal protein uL1 family. In terms of assembly, part of the 50S ribosomal subunit.

Its function is as follows. Binds directly to 23S rRNA. The L1 stalk is quite mobile in the ribosome, and is involved in E site tRNA release. Functionally, protein L1 is also a translational repressor protein, it controls the translation of the L11 operon by binding to its mRNA. The sequence is that of Large ribosomal subunit protein uL1 from Magnetococcus marinus (strain ATCC BAA-1437 / JCM 17883 / MC-1).